The primary structure comprises 442 residues: Decapping and exoribonuclease protein 1 (442 aa).

A compositionally biased stretch (basic and acidic residues) spans 31 to 40; that stretch reads QSKLCKEKTT. The segment at 31-56 is disordered; the sequence is QSKLCKEKTTSDSSSSRKPSQQRDNY. A compositionally biased stretch (low complexity) spans 41–53; that stretch reads SDSSSSRKPSQQR. Residue R101 coordinates substrate. E255 contributes to the a divalent metal cation binding site. E293 is a binding site for substrate. Positions 295, 306, and 307 each coordinate a divalent metal cation. 2 residues coordinate substrate: K308 and Q330.

The protein belongs to the DXO/Dom3Z family. A divalent metal cation is required as a cofactor.

It is found in the cytoplasm. It catalyses the reaction a 5'-end NAD(+)-phospho-ribonucleoside in mRNA + H2O = a 5'-end phospho-ribonucleoside in mRNA + NAD(+) + H(+). The catalysed reaction is a 5'-end (N(7)-methyl 5'-triphosphoguanosine)-ribonucleoside-ribonucleotide in mRNA + H2O = a (N(7)-methyl 5'-triphosphoguanosine)-nucleoside + a 5'-end phospho-ribonucleoside in mRNA + H(+). Its function is as follows. Decapping enzyme for NAD-capped RNAs: specifically hydrolyzes the nicotinamide adenine dinucleotide (NAD) cap from a subset of RNAs by removing the entire NAD moiety from the 5'-end of an NAD-capped RNA. The NAD-cap is present at the 5'-end of some RNAs and snoRNAs. In contrast to the canonical 5'-end N7 methylguanosine (m7G) cap, the NAD cap promotes mRNA decay. Also acts as a non-canonical decapping enzyme that removes the entire cap structure of m7G capped or incompletely capped RNAs. Has decapping activity toward incomplete 5'-end m7G cap mRNAs such as unmethylated 5'-end-capped RNA (cap0), while it has no activity toward 2'-O-ribose methylated m7G cap (cap1). Also has 5'-3' exonuclease activity. This chain is Decapping and exoribonuclease protein 1 (DXO1), found in Saccharomyces cerevisiae (strain ATCC 204508 / S288c) (Baker's yeast).